The following is a 178-amino-acid chain: Peptide deformylase (178 aa).

The Fe cation site is built by Cys96 and His138. Residue Glu139 is part of the active site. Residue His142 coordinates Fe cation.

This sequence belongs to the polypeptide deformylase family. The cofactor is Fe(2+).

The enzyme catalyses N-terminal N-formyl-L-methionyl-[peptide] + H2O = N-terminal L-methionyl-[peptide] + formate. Removes the formyl group from the N-terminal Met of newly synthesized proteins. Requires at least a dipeptide for an efficient rate of reaction. N-terminal L-methionine is a prerequisite for activity but the enzyme has broad specificity at other positions. This chain is Peptide deformylase, found in Bartonella tribocorum (strain CIP 105476 / IBS 506).